Here is a 174-residue protein sequence, read N- to C-terminus: Period clock protein (174 aa).

Residues 46-134 (SSEGTGAGTG…GTGTGTGTGT (89 aa)) form a disordered region. 45 consecutive repeat copies span residues 49-50 (GT), 51-52 (GA), 53-54 (GT), 55-56 (GT), 57-58 (GT), 59-60 (GT), 61-62 (GT), 63-64 (GT), 65-66 (GT), 67-68 (GT), 69-70 (GT), 71-72 (GT), 73-74 (GT), 75-76 (GT), 77-78 (GT), 79-80 (GT), 81-82 (GT), 83-84 (GT), 85-86 (GT), 87-88 (GT), 89-90 (GT), 91-92 (GT), 93-94 (GT), 95-96 (GT), 97-98 (GT), 99-100 (GT), 101-102 (GT), 103-104 (GT), 105-106 (GT), 107-108 (GT), 109-110 (GT), 111-112 (GT), 113-114 (GT), 115-116 (GT), 117-118 (GT), 119-120 (GT), 121-122 (GT), 123-124 (GT), 125-126 (GT), 127-128 (GT), 129-130 (GT), 131-132 (GT), 133-134 (GT), 135-136 (GT), and 137-138 (GT). The interval 49–138 (GTGAGTGTGT…GTGTGTGTGT (90 aa)) is 45 X 2 AA tandem repeats of G-[TA]. The segment covering 50 to 134 (TGAGTGTGTG…GTGTGTGTGT (85 aa)) has biased composition (gly residues).

Its subcellular location is the plastid. The protein localises to the chloroplast. In Acetabularia acetabulum (Mermaid's wine glass), this protein is Period clock protein.